Consider the following 451-residue polypeptide: Bifunctional protein GlmU (451 aa).

The pyrophosphorylase stretch occupies residues M1 to R230. UDP-N-acetyl-alpha-D-glucosamine is bound by residues L10–G13, K24, Q74, G79–T80, Y102–D104, G142, E156, N171, and N228. D104 provides a ligand contact to Mg(2+). Residue N228 coordinates Mg(2+). The segment at A231–A251 is linker. The N-acetyltransferase stretch occupies residues G252–K451. R317 and K335 together coordinate UDP-N-acetyl-alpha-D-glucosamine. H347 (proton acceptor) is an active-site residue. UDP-N-acetyl-alpha-D-glucosamine-binding residues include Y350 and N361. Acetyl-CoA contacts are provided by residues A364, N370–Y371, S389, A407, and R424.

In the N-terminal section; belongs to the N-acetylglucosamine-1-phosphate uridyltransferase family. It in the C-terminal section; belongs to the transferase hexapeptide repeat family. In terms of assembly, homotrimer. It depends on Mg(2+) as a cofactor.

The protein localises to the cytoplasm. The enzyme catalyses alpha-D-glucosamine 1-phosphate + acetyl-CoA = N-acetyl-alpha-D-glucosamine 1-phosphate + CoA + H(+). It catalyses the reaction N-acetyl-alpha-D-glucosamine 1-phosphate + UTP + H(+) = UDP-N-acetyl-alpha-D-glucosamine + diphosphate. The protein operates within nucleotide-sugar biosynthesis; UDP-N-acetyl-alpha-D-glucosamine biosynthesis; N-acetyl-alpha-D-glucosamine 1-phosphate from alpha-D-glucosamine 6-phosphate (route II): step 2/2. Its pathway is nucleotide-sugar biosynthesis; UDP-N-acetyl-alpha-D-glucosamine biosynthesis; UDP-N-acetyl-alpha-D-glucosamine from N-acetyl-alpha-D-glucosamine 1-phosphate: step 1/1. It participates in bacterial outer membrane biogenesis; LPS lipid A biosynthesis. Catalyzes the last two sequential reactions in the de novo biosynthetic pathway for UDP-N-acetylglucosamine (UDP-GlcNAc). The C-terminal domain catalyzes the transfer of acetyl group from acetyl coenzyme A to glucosamine-1-phosphate (GlcN-1-P) to produce N-acetylglucosamine-1-phosphate (GlcNAc-1-P), which is converted into UDP-GlcNAc by the transfer of uridine 5-monophosphate (from uridine 5-triphosphate), a reaction catalyzed by the N-terminal domain. The protein is Bifunctional protein GlmU of Sphingopyxis alaskensis (strain DSM 13593 / LMG 18877 / RB2256) (Sphingomonas alaskensis).